We begin with the raw amino-acid sequence, 761 residues long: MNQNLLVTKRDGSTERINLDKIHRVLDWAAEGLHNVSISQVELRSHIQFYDGIKTSDIHETIIKAAADLISRDAPDYQYLAARLAIFHLRKKAYGQFEPPALYDHVVKMVEMGKYDNHLLEDYTEEEFKQMDTFIDHDRDMTFSYAAVKQLEGKYLVQNRVTGEIYESAQFLYILVAACLFSNYPRETRLQYVKRFYDAVSTFKISLPTPIMSGVRTPTRQFSSCVLIECGDSLDSINATSSAIVKYVSQRAGIGINAGRIRALGSPIRGGEAFHTGCIPFYKHFQTAVKSCSQGGVRGGAATLFYPMWHLEVESLLVLKNNRGVEGNRVRHMDYGVQINKLMYTRLLKGEDITLFSPSDVPGLYDAFFADQEEFERLYTKYEKDDSIRKQRVKAVELFSLMMQERASTGRIYIQNVDHCNTHSPFDPAIAPVRQSNLCLEIALPTKPLNDVNDENGEIALCTLSAFNLGAINNLDELEELAILAVRALDALLDYQDYPIPAAKRGAMGRRTLGIGVINFAYYLAKHGKRYSDGSANNLTHKTFEAIQYYLLKASNELAKEQGACPWFNETTYAKGILPIDTYKKDLDTIANEPLHYDWEALRESIKTHGLRNSTLSALMPSETSSQISNATNGIEPPRGYVSIKASKDGILRQVVPDYEHLHDAYELLWEMPGNDGYLQLVGIMQKFIDQSISANTNYDPSRFPSGKVPMQQLLKDLLTAYKFGVKTLYYQNTRDGAEDAQDDLVPSIQDDGCESGACKI.

Positions 5–95 (LLVTKRDGST…IFHLRKKAYG (91 aa)) constitute an ATP-cone domain. ATP is bound by residues Lys-9, 15-21 (ERINLDK), Thr-55, and Lys-91. GDP is bound at residue Thr-209. Residues Cys-225 and Cys-462 are joined by a disulfide bond. Residues 232-234 (DSL), Arg-262, and Arg-269 each bind dTTP. Lys-283 is modified (N6-acetyllysine). Asn-437 provides a ligand contact to GDP. The active-site Proton acceptor is the Asn-437. Cys-439 (cysteine radical intermediate) is an active-site residue. GDP-binding positions include Glu-441 and 623–625 (ETS). Glu-441 functions as the Proton acceptor in the catalytic mechanism.

The protein belongs to the ribonucleoside diphosphate reductase large chain family. Tetramer of two alpha (R1) and two beta (R2) subunits. The B1 protein is a dimer of alpha subunits. A radical transfer pathway occurs between 'Tyr-122' of R2 and R1. Binding of the substrate occurs primarily when the active-site cysteines are reduced.

It carries out the reaction a 2'-deoxyribonucleoside 5'-diphosphate + [thioredoxin]-disulfide + H2O = a ribonucleoside 5'-diphosphate + [thioredoxin]-dithiol. Its activity is regulated as follows. Under complex allosteric control mediated by deoxynucleoside triphosphates and ATP binding to separate specificity and activation sites on the alpha subunit. The type of nucleotide bound at the specificity site determines substrate preference. It seems probable that ATP makes the enzyme reduce CDP and UDP, dGTP favors ADP reduction and dTTP favors GDP reduction. Stimulated by ATP and inhibited by dATP binding to the activity site. In vitro, its activity is increased by dithiothreitol (DTT) or thioredoxins (non-specific). Inhibited by hydroxyurea, leads to dNTP depletion, replication fork arrest and genomic instability. Provides the precursors necessary for DNA synthesis. Catalyzes the biosynthesis of deoxyribonucleotides from the corresponding ribonucleotides. R1 contains the binding sites for both substrates and allosteric effectors and carries out the actual reduction of the ribonucleotide. It also provides redox-active cysteines. This Escherichia coli (strain K12) protein is Ribonucleoside-diphosphate reductase 1 subunit alpha (nrdA).